The chain runs to 323 residues: Prenyl transferase (323 aa).

Positions 46, 49, and 81 each coordinate isopentenyl diphosphate. Mg(2+) is bound by residues Asp-88 and Asp-92. Arg-97 is an an all-trans-polyprenyl diphosphate binding site. Arg-98 contacts isopentenyl diphosphate. The an all-trans-polyprenyl diphosphate site is built by Lys-174, Thr-175, and Gln-212.

This sequence belongs to the FPP/GGPP synthase family. It depends on Mg(2+) as a cofactor.

Its subcellular location is the plastid. The protein resides in the chloroplast. Possible role in synthesis of the nonaprenyl side chain of plastoquinone or in synthesis of other prenyl chains such as undekaprenyl pyrophosphate. This is Prenyl transferase (preA) from Cyanidium caldarium (Red alga).